A 453-amino-acid chain; its full sequence is Glutamyl-tRNA(Gln) amidotransferase subunit A (453 aa).

Catalysis depends on charge relay system residues Lys-56 and Ser-131. Residue Ser-155 is the Acyl-ester intermediate of the active site.

Belongs to the amidase family. GatA subfamily. Heterotrimer of A, B and C subunits.

The enzyme catalyses L-glutamyl-tRNA(Gln) + L-glutamine + ATP + H2O = L-glutaminyl-tRNA(Gln) + L-glutamate + ADP + phosphate + H(+). In terms of biological role, allows the formation of correctly charged Gln-tRNA(Gln) through the transamidation of misacylated Glu-tRNA(Gln) in organisms which lack glutaminyl-tRNA synthetase. The reaction takes place in the presence of glutamine and ATP through an activated gamma-phospho-Glu-tRNA(Gln). The protein is Glutamyl-tRNA(Gln) amidotransferase subunit A of Campylobacter fetus subsp. fetus (strain 82-40).